A 416-amino-acid chain; its full sequence is Cysteate synthase (416 aa).

Lys104 is modified (N6-(pyridoxal phosphate)lysine). Position 130 (Asn130) interacts with pyridoxal 5'-phosphate.

This sequence belongs to the threonine synthase family. Cysteate synthase subfamily. As to quaternary structure, homotrimer. Requires pyridoxal 5'-phosphate as cofactor.

The catalysed reaction is O-phospho-L-serine + sulfite + H(+) = L-cysteate + phosphate. It participates in cofactor biosynthesis; coenzyme M biosynthesis. Specifically catalyzes the beta-elimination of phosphate from L-phosphoserine and the beta-addition of sulfite to the dehydroalanine intermediate to produce L-cysteate. This Methanosarcina barkeri (strain Fusaro / DSM 804) protein is Cysteate synthase.